Here is a 343-residue protein sequence, read N- to C-terminus: Heat-inducible transcription repressor HrcA (343 aa).

It belongs to the HrcA family.

Functionally, negative regulator of class I heat shock genes (grpE-dnaK-dnaJ and groELS operons). Prevents heat-shock induction of these operons. The chain is Heat-inducible transcription repressor HrcA from Bacillus velezensis (strain DSM 23117 / BGSC 10A6 / LMG 26770 / FZB42) (Bacillus amyloliquefaciens subsp. plantarum).